Consider the following 429-residue polypeptide: 3-phosphoshikimate 1-carboxyvinyltransferase (429 aa).

Lysine 23, serine 24, and arginine 28 together coordinate 3-phosphoshikimate. Lysine 23 provides a ligand contact to phosphoenolpyruvate. Residues glycine 95 and arginine 123 each contribute to the phosphoenolpyruvate site. Positions 168, 170, 316, and 343 each coordinate 3-phosphoshikimate. Phosphoenolpyruvate is bound at residue glutamine 170. Aspartate 316 functions as the Proton acceptor in the catalytic mechanism. Phosphoenolpyruvate contacts are provided by arginine 347 and arginine 389.

This sequence belongs to the EPSP synthase family. Monomer.

Its subcellular location is the cytoplasm. The catalysed reaction is 3-phosphoshikimate + phosphoenolpyruvate = 5-O-(1-carboxyvinyl)-3-phosphoshikimate + phosphate. The protein operates within metabolic intermediate biosynthesis; chorismate biosynthesis; chorismate from D-erythrose 4-phosphate and phosphoenolpyruvate: step 6/7. Catalyzes the transfer of the enolpyruvyl moiety of phosphoenolpyruvate (PEP) to the 5-hydroxyl of shikimate-3-phosphate (S3P) to produce enolpyruvyl shikimate-3-phosphate and inorganic phosphate. This Bacillus cereus (strain 03BB102) protein is 3-phosphoshikimate 1-carboxyvinyltransferase.